The primary structure comprises 220 residues: Deoxyribose-phosphate aldolase 2 (220 aa).

Asp-89 serves as the catalytic Proton donor/acceptor. Lys-151 acts as the Schiff-base intermediate with acetaldehyde in catalysis. Lys-180 functions as the Proton donor/acceptor in the catalytic mechanism.

It belongs to the DeoC/FbaB aldolase family. DeoC type 1 subfamily.

The protein resides in the cytoplasm. It catalyses the reaction 2-deoxy-D-ribose 5-phosphate = D-glyceraldehyde 3-phosphate + acetaldehyde. The protein operates within carbohydrate degradation; 2-deoxy-D-ribose 1-phosphate degradation; D-glyceraldehyde 3-phosphate and acetaldehyde from 2-deoxy-alpha-D-ribose 1-phosphate: step 2/2. Catalyzes a reversible aldol reaction between acetaldehyde and D-glyceraldehyde 3-phosphate to generate 2-deoxy-D-ribose 5-phosphate. This is Deoxyribose-phosphate aldolase 2 from Staphylococcus aureus (strain N315).